Reading from the N-terminus, the 520-residue chain is Probable glycine dehydrogenase (decarboxylating) subunit 2 (520 aa).

The tract at residues 1-29 (MWRQSRWNEPLITEMSRRGRRGALPPRPD) is disordered. Lys-279 is modified (N6-(pyridoxal phosphate)lysine).

This sequence belongs to the GcvP family. C-terminal subunit subfamily. The glycine cleavage system is composed of four proteins: P, T, L and H. In this organism, the P 'protein' is a heterodimer of two subunits. It depends on pyridoxal 5'-phosphate as a cofactor.

It catalyses the reaction N(6)-[(R)-lipoyl]-L-lysyl-[glycine-cleavage complex H protein] + glycine + H(+) = N(6)-[(R)-S(8)-aminomethyldihydrolipoyl]-L-lysyl-[glycine-cleavage complex H protein] + CO2. In terms of biological role, the glycine cleavage system catalyzes the degradation of glycine. The P protein binds the alpha-amino group of glycine through its pyridoxal phosphate cofactor; CO(2) is released and the remaining methylamine moiety is then transferred to the lipoamide cofactor of the H protein. This is Probable glycine dehydrogenase (decarboxylating) subunit 2 from Aeropyrum pernix (strain ATCC 700893 / DSM 11879 / JCM 9820 / NBRC 100138 / K1).